The following is a 229-amino-acid chain: Chloride conductance regulatory protein ICln (229 aa).

Belongs to the pICln (TC 1.A.47) family. In terms of assembly, homooligomer.

It localises to the cytoplasm. Its subcellular location is the nucleus. Functionally, may participate in cellular volume control by activation of a swelling-induced chloride conductance pathway. The polypeptide is Chloride conductance regulatory protein ICln (Arabidopsis thaliana (Mouse-ear cress)).